A 542-amino-acid polypeptide reads, in one-letter code: MWTTTSGLSGRSLRLSITFAAVVGFSLFGYNQGMMAGLLNGDEFVNSFPILKMPDNPTAGEKHYIDVIRGAVTSCYELGCFFGALFSMFCGNRLGRTRLIFMGASILIVGALLTTVCYTGKWEVGQFVIGRVVSGIGNGMNTATIPVWQSECSGAHNRGFLVCFEGAMIAGGTFIAYWVVFGISHAADSVQWRFPVALQIFFALVVATGALMLPDSPSWFVSRGLDNEACEVLGKIKGTSPDSDQVLHDFNLIKTDMESTKSEQSNWKTVFTFGKTQEFQRLLIGCSGQFFQQFTGCNAAIYYSTLLFQENLHMEKYLSLIMGGVFASVYALATIPSFFMIERVGRRKLYLIGFLGQGLSFVITFACLIKETEENSKGAAVGIFLFITFFAFTLLPLPWIYPPEINPLRTRTVGASASTCTNWMCNFAVVMFTPLFAGQSPWGVYLFFALFNFVGLIFGYFFYVETAGRELEEVDIIYAKAHVEGKMPFRVAHDLPKLSFEEIVQQSRELGLDTNDHVMLEKKELGLSSDSAQETEEVYEKQ.

The next 11 helical transmembrane spans lie at 19 to 39 (FAAV…AGLL), 70 to 90 (GAVT…SMFC), 99 to 119 (LIFM…VCYT), 127 to 149 (FVIG…PVWQ), 160 to 180 (FLVC…YWVV), 194 to 214 (FPVA…LMLP), 321 to 341 (IMGG…FFMI), 349 to 369 (LYLI…ACLI), 380 to 400 (AVGI…LPWI), 413 to 432 (VGAS…VVMF), and 444 to 464 (VYLF…FFYV).

This sequence belongs to the major facilitator superfamily. Sugar transporter (TC 2.A.1.1) family.

The protein localises to the membrane. Functionally, major facilitator superfamily transporter that may be involved in A.fumigatus adaptation to azoles such as vorizonazole. This Aspergillus fumigatus (strain ATCC MYA-4609 / CBS 101355 / FGSC A1100 / Af293) (Neosartorya fumigata) protein is Major facilitator superfamily transporter mfsA.